The following is a 701-amino-acid chain: MAQKDVLTDLSRVRNFGIMAHIDAGKTTTTERILYYTGINYKIGEVHDGAATMDWMEQEQERGITITSAATTTFWKDNQLNIIDTPGHVDFTVEVERNLRVLDGAVAVFDGKEGVEPQSEQVWRQADKYDVPRICFVNKMDKIGADFYFSVRTMGERLGANAVPIQLPVGAEADFEGVVDLVEMNAKVWRGETKLGETYDTVEIPADLAEQAEEYRTKLLEVVAESDEHLLEKYLGGEELTVDEIKGAIRKLTIASEIYPVLCGSAFKNKGVQPMLDAVVDYLPSPLDVPPAIGHAPAKEDEEVVRKATTDEPFAALAFKIATHPFFGKLTYIRVYSGTVESGSQVINATKGKKERLGKLFQMHSNKENPVDRASAGHIYAVIGLKDTTTGDTLSDPNQQIVLESMTFPDPVIEVAIEPKTKSDQEKLSLSIQKLAEEDPTFKVHLDSETGQTVIGGMGELHLDILVDRMRREFKVEANVGKPQVAYKETIKRLVQNVEYTHKKQTGGSGQFAKVIINLEPFTGEEGATYEFESKVTGGRIPREYIPSVDAGAQDAMQYGVLAGYPLVNLKVTLLDGAYHEVDSSEMAFKIAGSQVLKKAAALAQPVILEPIMAVEVTTPEDYMGDVIGDLNSRRGQIQAMEERAGARVVRAHVPLSEMFGYVGDLRSKTQGRANYSMVFDSYSEVPANVSKEIIAKATGE.

Residues 11–287 form the tr-type G domain; sequence SRVRNFGIMA…AVVDYLPSPL (277 aa). GTP is bound by residues 20 to 27, 84 to 88, and 138 to 141; these read AHIDAGKT, DTPGH, and NKMD.

Belongs to the TRAFAC class translation factor GTPase superfamily. Classic translation factor GTPase family. EF-G/EF-2 subfamily.

It is found in the cytoplasm. Its function is as follows. Catalyzes the GTP-dependent ribosomal translocation step during translation elongation. During this step, the ribosome changes from the pre-translocational (PRE) to the post-translocational (POST) state as the newly formed A-site-bound peptidyl-tRNA and P-site-bound deacylated tRNA move to the P and E sites, respectively. Catalyzes the coordinated movement of the two tRNA molecules, the mRNA and conformational changes in the ribosome. The polypeptide is Elongation factor G (fusA) (Mycobacterium tuberculosis (strain CDC 1551 / Oshkosh)).